Consider the following 251-residue polypeptide: 1-(5-phosphoribosyl)-5-[(5-phosphoribosylamino)methylideneamino] imidazole-4-carboxamide isomerase (251 aa).

The Proton acceptor role is filled by Asp8. Asp131 serves as the catalytic Proton donor.

The protein belongs to the HisA/HisF family.

The protein resides in the cytoplasm. The catalysed reaction is 1-(5-phospho-beta-D-ribosyl)-5-[(5-phospho-beta-D-ribosylamino)methylideneamino]imidazole-4-carboxamide = 5-[(5-phospho-1-deoxy-D-ribulos-1-ylimino)methylamino]-1-(5-phospho-beta-D-ribosyl)imidazole-4-carboxamide. It participates in amino-acid biosynthesis; L-histidine biosynthesis; L-histidine from 5-phospho-alpha-D-ribose 1-diphosphate: step 4/9. This chain is 1-(5-phosphoribosyl)-5-[(5-phosphoribosylamino)methylideneamino] imidazole-4-carboxamide isomerase, found in Burkholderia lata (strain ATCC 17760 / DSM 23089 / LMG 22485 / NCIMB 9086 / R18194 / 383).